We begin with the raw amino-acid sequence, 85 residues long: U4-theraphotoxin-Hhn1c (85 aa).

The signal sequence occupies residues 1–22 (MKVTLIAIVTCAAVLVLHTTAA). A propeptide spanning residues 23–48 (EELEAESQLMEVGMPDTELAAVDEER) is cleaved from the precursor. 3 disulfide bridges follow: Cys-52–Cys-66, Cys-56–Cys-77, and Cys-71–Cys-82.

The protein belongs to the neurotoxin 12 (Hwtx-2) family. 02 (Hwtx-2) subfamily. Expressed by the venom gland.

The protein localises to the secreted. Functionally, postsynaptic neurotoxin. The polypeptide is U4-theraphotoxin-Hhn1c (Cyriopagopus hainanus (Chinese bird spider)).